A 182-amino-acid chain; its full sequence is Large ribosomal subunit protein uL22 (182 aa).

Residues 155-182 form a disordered region; sequence SGVDGAKQGKKKKKTDGVEKATTKRQKQ.

Belongs to the universal ribosomal protein uL22 family.

This Carabus granulatus (Ground beetle) protein is Large ribosomal subunit protein uL22 (RpL17).